The primary structure comprises 433 residues: GTPase Obg (433 aa).

The Obg domain maps to 1–159 (MKFVDSADLI…FEIRAELKVL (159 aa)). In terms of domain architecture, OBG-type G spans 160–332 (ADVGFVGLPN…LLFMIYEELK (173 aa)). GTP-binding positions include 166-173 (GLPNAGKS), 191-195 (FTTIN), 213-216 (DLPG), 284-287 (NKMD), and 313-315 (SGL). Serine 173 and threonine 193 together coordinate Mg(2+). Residues 355–433 (KFEEQKEDIQ…VFDYELEWTD (79 aa)) enclose the OCT domain.

Belongs to the TRAFAC class OBG-HflX-like GTPase superfamily. OBG GTPase family. Monomer. The cofactor is Mg(2+).

The protein resides in the cytoplasm. In terms of biological role, an essential GTPase which binds GTP, GDP and possibly (p)ppGpp with moderate affinity, with high nucleotide exchange rates and a fairly low GTP hydrolysis rate. Plays a role in control of the cell cycle, stress response, ribosome biogenesis and in those bacteria that undergo differentiation, in morphogenesis control. This is GTPase Obg from Mycoplasma capricolum subsp. capricolum (strain California kid / ATCC 27343 / NCTC 10154).